A 270-amino-acid chain; its full sequence is Ribitol operon repressor (270 aa).

One can recognise an HTH lacI-type domain in the interval 1-61; sequence MKKITIYDLA…INRQASMLRS (61 aa). The H-T-H motif DNA-binding region spans 6–25; that stretch reads IYDLAELSGVSASAVSAILN.

Its function is as follows. Repressor for the genes of the ribitol operon. Binds D-ribulose as an inducer. The protein is Ribitol operon repressor (rbtR) of Klebsiella aerogenes (Enterobacter aerogenes).